A 201-amino-acid polypeptide reads, in one-letter code: Putative manganese efflux pump MntP (201 aa).

Helical transmembrane passes span 6 to 26 (CLAVAVALAMDAFAVAIATGI), 39 to 59 (LAFHFGLFQALMPVAGWTLGL), 105 to 125 (LTLIMLAVATSIDALAVGLSL), 127 to 147 (VLGIDIVTPAIVIGVVCLLFT), and 169 to 189 (LAGGVVLIGIGLRILYEHGVF).

It belongs to the MntP (TC 9.B.29) family.

The protein localises to the cell inner membrane. Probably functions as a manganese efflux pump. In Nitratidesulfovibrio vulgaris (strain ATCC 29579 / DSM 644 / CCUG 34227 / NCIMB 8303 / VKM B-1760 / Hildenborough) (Desulfovibrio vulgaris), this protein is Putative manganese efflux pump MntP.